Here is a 124-residue protein sequence, read N- to C-terminus: Ribonuclease pancreatic (124 aa).

A compositionally biased stretch (basic and acidic residues) spans 1–13 (KETAAAKFERQHM). Residues 1-22 (KETAAAKFERQHMDSSTSAASS) form a disordered region. The substrate site is built by lysine 7 and arginine 10. The active-site Proton acceptor is the histidine 12. Intrachain disulfides connect cysteine 26/cysteine 84, cysteine 40/cysteine 95, cysteine 58/cysteine 110, and cysteine 65/cysteine 72. A glycan (N-linked (GlcNAc...) asparagine) is linked at asparagine 34. Residues 41 to 45 (KPVNT), lysine 66, and arginine 85 each bind substrate. The Proton donor role is filled by histidine 119.

It belongs to the pancreatic ribonuclease family. In terms of assembly, monomer. Interacts with and forms tight 1:1 complexes with RNH1. Dimerization of two such complexes may occur. Interaction with RNH1 inhibits this protein. As to expression, pancreas.

The protein localises to the secreted. It catalyses the reaction an [RNA] containing cytidine + H2O = an [RNA]-3'-cytidine-3'-phosphate + a 5'-hydroxy-ribonucleotide-3'-[RNA].. The catalysed reaction is an [RNA] containing uridine + H2O = an [RNA]-3'-uridine-3'-phosphate + a 5'-hydroxy-ribonucleotide-3'-[RNA].. Endonuclease that catalyzes the cleavage of RNA on the 3' side of pyrimidine nucleotides. Acts on single-stranded and double-stranded RNA. This Bison bison (American bison) protein is Ribonuclease pancreatic (RNASE1).